Reading from the N-terminus, the 306-residue chain is UDP-3-O-acyl-N-acetylglucosamine deacetylase (306 aa).

H79, H238, and D242 together coordinate Zn(2+). H265 (proton donor) is an active-site residue.

This sequence belongs to the LpxC family. It depends on Zn(2+) as a cofactor.

The catalysed reaction is a UDP-3-O-[(3R)-3-hydroxyacyl]-N-acetyl-alpha-D-glucosamine + H2O = a UDP-3-O-[(3R)-3-hydroxyacyl]-alpha-D-glucosamine + acetate. Its pathway is glycolipid biosynthesis; lipid IV(A) biosynthesis; lipid IV(A) from (3R)-3-hydroxytetradecanoyl-[acyl-carrier-protein] and UDP-N-acetyl-alpha-D-glucosamine: step 2/6. Its function is as follows. Catalyzes the hydrolysis of UDP-3-O-myristoyl-N-acetylglucosamine to form UDP-3-O-myristoylglucosamine and acetate, the committed step in lipid A biosynthesis. This is UDP-3-O-acyl-N-acetylglucosamine deacetylase from Shewanella sp. (strain W3-18-1).